We begin with the raw amino-acid sequence, 899 residues long: MLKPQIHKPHLVNKLPLGTPFIPSHASIASFSTTSLRTLSVQKCYRRYIRYTSSNIKAIMPDSIGKSIRKKCVVTVQPTISGALTAVTVGLLGTVADSVSDFLGRSFLLELVSSDLDSSGKEKDTVKAYATYDELDKESKLYKYQCEFEVPDDFGEIGAVLVQNERHRDAYVKNIVLDEIVTFTCDSWIHSKFDNPDKRIFFLNKSYLPSETPEGLKSLRQKDLESLRGNGEGERQSFDRIYDYDTYNDIGDPDTDSDMARPVLGGNEHPFPRRCRTGRKMTSTEPWSESRTTLPFYVPRDEDFAEIKQITRGATTLYSVLHGVIPALSSVLKDEDKGFPLFRDIELLYEKGVDIDPPPDSGTLSALPRLVKAITNSTKKVLQFETPRIKHKDSFSWFRDEEFCRQTLAGLNPYSIQLVTEWPLMSKLDPEVYGPAESAITKETVEEEIKGFMTXEEALEQKRLFLLDYHDLLLPYVNKVREIEGTTLYGSRTLMFLTCTGTLRPLAIELTRPPNNGKPQWKHVYTPCWDATDXWLWKLAKAHVLAHDSGYHQLVSHWLRTHCVTEPYIIATNRQLSKMHPIQRLLCPHLRYTMQINGLARLSLINANGIIESSFSPRKYSMQLSSDAYAQKWRFDHEALPADLISRGMAVEDESAPHGIKLTIEDYPFANDGLLLWDAIKQWATAYINHYYPQAKLVESDEELQAWWTEIRTVGHADKKDEPWWPQLKTQQDLIGVVSTIMWVSSGHHSAVNFGQYDFGGYFPNRPTIARTKMPNEDPTFEEWEAFMEKPEDVLLNCFPTQIQATKVMAILDVLSSHSPDEEYIGTSMEASWEAEPAIKSAFEEFCGRLKKLDDIIDSRNRDPILRNRTGAGLVQYQLLKPFSGHGVTGKGVPYSISI.

A chloroplast-targeting transit peptide spans 1–57; the sequence is MLKPQIHKPHLVNKLPLGTPFIPSHASIASFSTTSLRTLSVQKCYRRYIRYTSSNIK. Residues 83-203 form the PLAT domain; it reads ALTAVTVGLL…DNPDKRIFFL (121 aa). A Lipoxygenase domain is found at 206–899; that stretch reads SYLPSETPEG…GKGVPYSISI (694 aa). Positions 252–286 are disordered; the sequence is DPDTDSDMARPVLGGNEHPFPRRCRTGRKMTSTEP. Residues H557, H562, H749, N753, and I899 each contribute to the Fe cation site.

The protein belongs to the lipoxygenase family. It depends on Fe cation as a cofactor. As to expression, confined to glandular trichomes in flowers.

The protein localises to the plastid. It is found in the chloroplast. It functions in the pathway lipid metabolism; oxylipin biosynthesis. Its function is as follows. Plant lipoxygenases may be involved in a number of diverse aspects of plant physiology including growth and development, pest resistance, and senescence or responses to wounding. Catalyzes the hydroperoxidation of lipids containing a cis,cis-1,4-pentadiene structure. The polypeptide is Lipoxygenase 2, chloroplastic (Tanacetum cinerariifolium (Dalmatian daisy)).